The following is a 490-amino-acid chain: GTPase Der (490 aa).

2 EngA-type G domains span residues 3–166 and 203–376; these read PVVA…VDEI and IKLA…DSST. Residues 9-16, 56-60, 118-121, 209-216, 256-260, and 321-324 contribute to the GTP site; these read GRPNVGKS, DTGGI, NKTD, DTAGV, and NKWD. A KH-like domain is found at 377–461; sequence RRQSTAMLTR…PIRIQFKEGE (85 aa).

The protein belongs to the TRAFAC class TrmE-Era-EngA-EngB-Septin-like GTPase superfamily. EngA (Der) GTPase family. In terms of assembly, associates with the 50S ribosomal subunit.

GTPase that plays an essential role in the late steps of ribosome biogenesis. The protein is GTPase Der of Enterobacter sp. (strain 638).